Consider the following 301-residue polypeptide: Chitosanase (301 aa).

Residues 1 to 42 form the signal peptide; that stretch reads MHMSNARPSKSRTKFLLAFLCFTLMASLFGATALFGPSKAAA. Catalysis depends on Glu-79, which acts as the Proton donor. Cys-92 and Cys-166 are oxidised to a cystine. The Nucleophile role is filled by Asp-97.

This sequence belongs to the glycosyl hydrolase 46 family.

It is found in the secreted. The catalysed reaction is Endohydrolysis of beta-(1-&gt;4)-linkages between D-glucosamine residues in a partly acetylated chitosan.. Its function is as follows. Aids in the defense against invading fungal pathogens by degrading their cell wall chitosan. In Niallia circulans (Bacillus circulans), this protein is Chitosanase (csn).